The sequence spans 355 residues: GPN-loop GTPase 1 (355 aa).

The segment at 1–30 is disordered; sequence MAEKAENLPSSSAEASEEPSPQTGPNVNQK. Over residues 9–21 the composition is skewed to low complexity; the sequence is PSSSAEASEEPSP. Residue 40-45 coordinates GTP; sequence GSGKTT. The short motif at 97 to 99 is the Gly-Pro-Asn (GPN)-loop; involved in dimer interface element; it reads GPN. 200–203 lines the GTP pocket; it reads NKAD. Residues 286–311 are a coiled coil; sequence EKVLAEKKLLDEEERKKRDEETLKGK.

The protein belongs to the GPN-loop GTPase family. Heterodimer with GPN3. Binds to RNA polymerase II (RNAPII).

It localises to the cytoplasm. It is found in the nucleus. Its function is as follows. Small GTPase required for proper nuclear import of RNA polymerase II (RNAPII). May act at an RNAP assembly step prior to nuclear import. The polypeptide is GPN-loop GTPase 1 (Caenorhabditis elegans).